The following is a 101-amino-acid chain: Chaperone modulatory protein CbpM (101 aa).

This sequence belongs to the CbpM family.

Functionally, interacts with CbpA and inhibits both the DnaJ-like co-chaperone activity and the DNA binding activity of CbpA. Together with CbpA, modulates the activity of the DnaK chaperone system. Does not inhibit the co-chaperone activity of DnaJ. The protein is Chaperone modulatory protein CbpM of Pseudomonas entomophila (strain L48).